Consider the following 461-residue polypeptide: Bifunctional protein HldE (461 aa).

Residues 1-312 (MLEFLSQQKP…IRSFKSMSFE (312 aa)) are ribokinase. 191-194 (NKKE) serves as a coordination point for ATP. The active site involves Asp259. The cytidylyltransferase stretch occupies residues 334-461 (FTNGCFDIVH…KIIEKIKDKK (128 aa)).

In the N-terminal section; belongs to the carbohydrate kinase PfkB family. It in the C-terminal section; belongs to the cytidylyltransferase family. In terms of assembly, homodimer.

It catalyses the reaction D-glycero-beta-D-manno-heptose 7-phosphate + ATP = D-glycero-beta-D-manno-heptose 1,7-bisphosphate + ADP + H(+). It carries out the reaction D-glycero-beta-D-manno-heptose 1-phosphate + ATP + H(+) = ADP-D-glycero-beta-D-manno-heptose + diphosphate. It participates in nucleotide-sugar biosynthesis; ADP-L-glycero-beta-D-manno-heptose biosynthesis; ADP-L-glycero-beta-D-manno-heptose from D-glycero-beta-D-manno-heptose 7-phosphate: step 1/4. The protein operates within nucleotide-sugar biosynthesis; ADP-L-glycero-beta-D-manno-heptose biosynthesis; ADP-L-glycero-beta-D-manno-heptose from D-glycero-beta-D-manno-heptose 7-phosphate: step 3/4. Its function is as follows. Catalyzes the phosphorylation of D-glycero-D-manno-heptose 7-phosphate at the C-1 position to selectively form D-glycero-beta-D-manno-heptose-1,7-bisphosphate. In terms of biological role, catalyzes the ADP transfer from ATP to D-glycero-beta-D-manno-heptose 1-phosphate, yielding ADP-D-glycero-beta-D-manno-heptose. The chain is Bifunctional protein HldE from Campylobacter jejuni (strain RM1221).